The primary structure comprises 610 residues: Elongation factor 4 (610 aa).

The 183-residue stretch at 14-196 folds into the tr-type G domain; sequence NRIRNFSIIA…ALVANIPPPK (183 aa). GTP contacts are provided by residues 26–31 and 143–146; these read DHGKST and NKID.

This sequence belongs to the TRAFAC class translation factor GTPase superfamily. Classic translation factor GTPase family. LepA subfamily.

The protein resides in the cell inner membrane. It catalyses the reaction GTP + H2O = GDP + phosphate + H(+). In terms of biological role, required for accurate and efficient protein synthesis under certain stress conditions. May act as a fidelity factor of the translation reaction, by catalyzing a one-codon backward translocation of tRNAs on improperly translocated ribosomes. Back-translocation proceeds from a post-translocation (POST) complex to a pre-translocation (PRE) complex, thus giving elongation factor G a second chance to translocate the tRNAs correctly. Binds to ribosomes in a GTP-dependent manner. This is Elongation factor 4 from Legionella pneumophila (strain Lens).